Here is an 80-residue protein sequence, read N- to C-terminus: MAFLKKSLFLVLFLGIVSLSICEEEKREGEEEEKQEEENEELSEEELRERRALLDKLKSLGKVVGKVALGVAQHYLNPQQ.

The N-terminal stretch at 1 to 22 (MAFLKKSLFLVLFLGIVSLSIC) is a signal peptide. The propeptide occupies 23 to 49 (EEEKREGEEEEKQEEENEELSEEELRE). Residues 27–46 (REGEEEEKQEEENEELSEEE) are disordered. Positions 30 to 44 (EEEEKQEEENEELSE) are enriched in acidic residues.

Belongs to the frog skin active peptide (FSAP) family. Dermaseptin subfamily. Expressed by the skin glands.

It is found in the secreted. Its function is as follows. Has antibacterial activity. In Boana raniceps (Chaco tree frog), this protein is Raniseptin-7.